Reading from the N-terminus, the 201-residue chain is Phospholipase A2 inhibitor NAI (201 aa).

A signal peptide spans M1–C19. Disulfide bonds link C22–C47, C25–C32, C40–C68, C74–C95, C96–C101, C119–C144, C137–C166, and C170–C191. N176 is a glycosylation site (N-linked (GlcNAc...) asparagine).

It belongs to the CNF-like-inhibitor family. In terms of assembly, heterotrimer of 2 subunits A and 1 subunit B; non-covalently linked. N-glycosylated, probably by biantennary structure. Glycosylation does not change PLA2 inhibitory activity. In terms of tissue distribution, expressed by the liver.

The protein localises to the secreted. In terms of biological role, inhibits the enzymatic activity of all phospholipase A2 tested, binding them with micromole to nanomole affinity. The sequence is that of Phospholipase A2 inhibitor NAI from Notechis ater (Black tiger snake).